The following is a 922-amino-acid chain: MNRFKASKFRHMEARPSRREAWISDIRAGTTATCGNHIKSSCSLIAFNSDRPGVLGIISLEGHEENKRHVTYLGCHSDLVTDLDFSPFDDFLLASGSADRTIKLWRLSSTGEALPSVPGVVLGPEELPVDVLQFHPTADGVLVSTAGRTVKVWDVAKQQHLTELEAHKDLVQSAVWSRDGATVGTACKDKQLRIFDPRARAQASQSTQAHENNRDIRLAWTGIQEYLVSTGFNQMREREAKLWDTRVFSSALASITLDTSPGSLIPLLDPDSGLLVLAGKGENQLYCYEVTPQQPALSPVTQCILENALRGAALVPRQALAVMNCEVLQVLQLSDTAIIPISHRVPRKAVEFHEDLFPDTAGSVPASDAHTWWAGDNQQVQKVSLNPAHRPHPRFTSSLLPTLEPSPNMEQPAELPRADTELSEGFSSPSSLVSPSTPSSLGLSLSSTSGIGTSPSQRSLQSLLGPSSKFRHAEGTILHRDSHITNLKGLNLTTPGESDGFCANRLRVAVPLLSSGGQVAVLELQKPGRLPDTALPTLQNGAAVMDLVWDPFDPHRLAVAGEDARIRLWRVPPGGLKNVLTTPETVLTGHTEKIYSLRFHPLAADVLASSSYDLTIRIWDLQAGTEQLRLQGHQDQIFSLAWSPDGKQLATVCKDGRVRVYDPRSSPLPLQDGPGPEGGRGARIVWVCNGGCLLVSGFDSRSERQLQLYMADALAEGPSALLGLDVAPSTLLPSYDPDTGLVLLTGKGDTRVFLYEVIPEAPFFLECNSFTSPDPHKGFILLPKTECDIQDVEFARCLRLRQTSLEPVAFRLPRVRKEFFQDDVFPDTAVTWASALDAKAWFKGANGQPRLLSLQPPGMTPVSQAPREVPARRTPSSAQYLEEKSDQQKKEELLNAMVAKLGNREDPLPQDSFEGVDEDEWD.

WD repeat units lie at residues 75-115 (CHSD…EALP), 124-163 (PEEL…HLTE), 166-205 (AHKD…QASQ), and 209-253 (AHEN…SALA). The disordered stretch occupies residues 386-462 (NPAHRPHPRF…TSPSQRSLQS (77 aa)). Residues 423–456 (SEGFSSPSSLVSPSTPSSLGLSLSSTSGIGTSPS) are compositionally biased toward low complexity. Phosphoserine is present on residues Ser459 and Ser462. Lys469 participates in a covalent cross-link: Glycyl lysine isopeptide (Lys-Gly) (interchain with G-Cter in ubiquitin). 4 WD repeats span residues 539–579 (QNGA…LKNV), 589–629 (GHTE…EQLR), 632–671 (GHQD…LPLQ), and 725–765 (DVAP…PFFL). Positions 854-922 (LQPPGMTPVS…FEGVDEDEWD (69 aa)) are disordered. A Phosphothreonine modification is found at Thr874. Over residues 881 to 893 (LEEKSDQQKKEEL) the composition is skewed to basic and acidic residues. At Ser912 the chain carries Phosphoserine.

Belongs to the WD repeat coronin family. As to quaternary structure, interacts with clathrin adapter AP1 complex. This interaction takes place at Golgi membranes and not AP1-positive endosomal membranes. Interacts (when ubiquitinated at Lys-469) with EPS15. In terms of processing, the membrane-associated form is phosphorylated on tyrosine residues. Post-translationally, ubiquitinated via 'Lys-33'-linked ubiquitin chains by the BCR(KLHL20) E3 ubiquitin ligase complex: 'Lys-33'-linked ubiquitination promotes interaction with EPS15 and facilitates actin polymerization at the trans-Golgi network, thereby facilitating post-Golgi trafficking. Deubiquitinated by ZRANB1/TRABID.

It is found in the golgi apparatus membrane. It localises to the golgi apparatus. The protein resides in the trans-Golgi network. The protein localises to the cytoplasmic vesicle. Its subcellular location is the cytoplasm. It is found in the cytosol. Functionally, F-actin regulator involved in anterograde Golgi to endosome transport: upon ubiquitination via 'Lys-33'-linked ubiquitin chains by the BCR(KLHL20) E3 ubiquitin ligase complex, interacts with EPS15 and localizes to the trans-Golgi network, where it promotes actin polymerization, thereby facilitating post-Golgi trafficking. May play a role in the maintenance of the Golgi apparatus morphology. The chain is Coronin-7 (Coro7) from Rattus norvegicus (Rat).